The chain runs to 398 residues: Serpin-ZX (398 aa).

The RCL stretch occupies residues 342–366 (GTEAAARTARVVTLRSLPVEPVKVD).

This sequence belongs to the serpin family. In terms of tissue distribution, expressed in roots, coleoptiles, shoots, leaves, embryo and endosperm.

Its function is as follows. Inhibits chymotrypsin, cathepsin G and trypsin in vitro. This Hordeum vulgare (Barley) protein is Serpin-ZX (PAZX).